Consider the following 303-residue polypeptide: UDP-3-O-acyl-N-acetylglucosamine deacetylase (303 aa).

3 residues coordinate Zn(2+): His-78, His-237, and Asp-241. His-264 serves as the catalytic Proton donor.

This sequence belongs to the LpxC family. Zn(2+) is required as a cofactor.

It catalyses the reaction a UDP-3-O-[(3R)-3-hydroxyacyl]-N-acetyl-alpha-D-glucosamine + H2O = a UDP-3-O-[(3R)-3-hydroxyacyl]-alpha-D-glucosamine + acetate. It participates in glycolipid biosynthesis; lipid IV(A) biosynthesis; lipid IV(A) from (3R)-3-hydroxytetradecanoyl-[acyl-carrier-protein] and UDP-N-acetyl-alpha-D-glucosamine: step 2/6. In terms of biological role, catalyzes the hydrolysis of UDP-3-O-myristoyl-N-acetylglucosamine to form UDP-3-O-myristoylglucosamine and acetate, the committed step in lipid A biosynthesis. The polypeptide is UDP-3-O-acyl-N-acetylglucosamine deacetylase (Azotobacter vinelandii (strain DJ / ATCC BAA-1303)).